The following is a 64-amino-acid chain: MAQEQTKRGGGGGDDEDVTGTTAAGQERRKKLAQDTDDLLDEIDDVLEENAEDFVRAYVQKGGQ.

The tract at residues 1 to 36 is disordered; sequence MAQEQTKRGGGGGDDEDVTGTTAAGQERRKKLAQDT. An ARC ATPase binding region spans residues 21–58; the sequence is TTAAGQERRKKLAQDTDDLLDEIDDVLEENAEDFVRAY. The stretch at 26 to 52 forms a coiled coil; sequence QERRKKLAQDTDDLLDEIDDVLEENAE. Residue Gln64 is modified to Deamidated glutamine. Residue Gln64 forms an Isoglutamyl lysine isopeptide (Gln-Lys) (interchain with K-? in acceptor proteins) linkage.

Belongs to the prokaryotic ubiquitin-like protein family. As to quaternary structure, strongly interacts with the proteasome-associated ATPase ARC through a hydrophobic interface; the interacting region of Pup lies in its C-terminal half. There is one Pup binding site per ARC hexamer ring. Post-translationally, is modified by deamidation of its C-terminal glutamine to glutamate by the deamidase Dop, a prerequisite to the subsequent pupylation process.

The protein operates within protein degradation; proteasomal Pup-dependent pathway. Functionally, protein modifier that is covalently attached to lysine residues of substrate proteins, thereby targeting them for proteasomal degradation. The tagging system is termed pupylation. The chain is Prokaryotic ubiquitin-like protein Pup from Mycobacterium ulcerans (strain Agy99).